Reading from the N-terminus, the 541-residue chain is Nuclear receptor subfamily 5 group A member 2 (541 aa).

The span at 1-10 (MSSNSDTGDL) shows a compositional bias: polar residues. Residues 1–35 (MSSNSDTGDLQESLKHGLTPIGAGLPDRHGSPIPA) are disordered. The segment at residues 83-154 (EELCPVCGDK…KCLSVGMKLE (72 aa)) is a DNA-binding region (nuclear receptor). Zn(2+) is bound by residues Cys-86, Cys-89, Cys-103, Cys-106, Cys-122, Cys-128, Cys-138, and Cys-141. 2 NR C4-type zinc fingers span residues 86 to 106 (CPVC…CESC) and 122 to 146 (CIEN…FQKC). A C-terminal extension (CTE) region spans residues 152-167 (KLEAVRADRMRGGRNK). Positions 168–187 (FGPMYKRDRALKQQKKALIR) match the FTZ-F1 box motif. Residue Lys-270 forms a Glycyl lysine isopeptide (Lys-Gly) (interchain with G-Cter in SUMO1) linkage. Residues 300–539 (SIPHLILELL…NLLIEMLHAK (240 aa)) enclose the NR LBD domain. A phospholipid derivative-binding positions include 421–424 (GATL), Tyr-516, and Lys-520. Residues 528–539 (YNNLLIEMLHAK) form an AF-2 region.

It belongs to the nuclear hormone receptor family. NR5 subfamily. In terms of assembly, monomer; Binds DNA as a monomer. Interacts with nuclear receptor corepressors NR0B1 and NR0B2; repressing NR5A2 nuclear receptor activity. Interacts with nuclear receptor coactivators CTNNB1, PPARGC1A and NCOA2; interaction takes place following ligand-binding and promotes target gene activation. Interacts (when sumoylated) with GPS2; interaction with GPS2 onto hepatic acute phase protein promoters prevents N-Cor corepressor complex dissociation. Interacts with HNF1A. Interacts with GRIP1. In terms of processing, sumoylated by SUMO1 at Lys-270 during the hepatic acute phase response, leading to promote interaction with GPS2 and prevent N-Cor corepressor complex dissociation. Abundantly expressed in pancreas, less in liver, very low levels in heart and lung. Expressed in the Hep-G2 cell line. Isoform 1 and isoform 2 seem to be present in fetal and adult liver and Hep-G2 cells.

It is found in the nucleus. The protein localises to the chromosome. With respect to regulation, activated by synthetic agonists RR-RJW100, SR-RJW100, endo sulfamide compound 6N and GSK8470. Orphan nuclear receptor that binds DNA as a monomer to the 5'-TCAAGGCCA-3' sequence and controls expression of target genes: regulates key biological processes, such as early embryonic development, cholesterol and bile acid synthesis pathways, as well as liver and pancreas morphogenesis. Ligand-binding causes conformational change which causes recruitment of coactivators, promoting target gene activation. The specific ligand is unknown, but specific phospholipids, such as phosphatidylethanolamine, phosphatidylserine, dilauroyl phosphatidylcholine and diundecanoyl phosphatidylcholine can act as ligand in vitro. Acts as a pioneer transcription factor, which unwraps target DNA from histones and elicits local opening of closed chromatin. Plays a central role during preimplantation stages of embryonic development. Plays a minor role in zygotic genome activation (ZGA) by regulating a small set of two-cell stage genes. Plays a major role in morula development (2-16 cells embryos) by acting as a master regulator at the 8-cell stage, controlling expression of lineage-specifying transcription factors and genes involved in mitosis, telomere maintenance and DNA repair. Zygotic NR5A2 binds to both closed and open chromatin with other transcription factors, often at SINE B1/Alu repeats DNA elements, promoting chromatin accessibility at nearby regulatory regions. Also involved in the epiblast stage of development and embryonic stem cell pluripotency, by promoting expression of POU5F1/OCT4. Regulates other processes later in development, such as formation of connective tissue in lower jaw and middle ear, neural stem cell differentiation, ovarian follicle development and Sertoli cell differentiation. Involved in exocrine pancreas development and acinar cell differentiation. Acts as an essential transcriptional regulator of lipid metabolism. Key regulator of cholesterol 7-alpha-hydroxylase gene (CYP7A) expression in liver. Also acts as a negative regulator of inflammation in different organs, such as, liver and pancreas. Protects against intestinal inflammation via its ability to regulate glucocorticoid production. Plays an anti-inflammatory role during the hepatic acute phase response by acting as a corepressor: inhibits the hepatic acute phase response by preventing dissociation of the N-Cor corepressor complex. Acts as a regulator of immunity by promoting lymphocyte T-cell development, proliferation and effector functions. Also involved in resolution of endoplasmic reticulum stress in the liver. Its function is as follows. In constrast to isoform 1 and isoform 2, does not induce cholesterol 7-alpha-hydroxylase gene (CYP7A) promoter activity. Functionally, (Microbial infection) Plays a crucial role for hepatitis B virus gene transcription and DNA replication. Mechanistically, synergistically cooperates with HNF1A to up-regulate the activity of one of the critical cis-elements in the hepatitis B virus genome enhancer II (ENII). This chain is Nuclear receptor subfamily 5 group A member 2, found in Homo sapiens (Human).